A 215-amino-acid polypeptide reads, in one-letter code: 3-isopropylmalate dehydratase small subunit (215 aa).

It belongs to the LeuD family. LeuD type 1 subfamily. Heterodimer of LeuC and LeuD.

The enzyme catalyses (2R,3S)-3-isopropylmalate = (2S)-2-isopropylmalate. The protein operates within amino-acid biosynthesis; L-leucine biosynthesis; L-leucine from 3-methyl-2-oxobutanoate: step 2/4. Functionally, catalyzes the isomerization between 2-isopropylmalate and 3-isopropylmalate, via the formation of 2-isopropylmaleate. The chain is 3-isopropylmalate dehydratase small subunit from Teredinibacter turnerae (strain ATCC 39867 / T7901).